Reading from the N-terminus, the 180-residue chain is ATP synthase subunit delta (180 aa).

Belongs to the ATPase delta chain family. F-type ATPases have 2 components, F(1) - the catalytic core - and F(0) - the membrane proton channel. F(1) has five subunits: alpha(3), beta(3), gamma(1), delta(1), epsilon(1). F(0) has three main subunits: a(1), b(2) and c(10-14). The alpha and beta chains form an alternating ring which encloses part of the gamma chain. F(1) is attached to F(0) by a central stalk formed by the gamma and epsilon chains, while a peripheral stalk is formed by the delta and b chains.

The protein resides in the cell membrane. F(1)F(0) ATP synthase produces ATP from ADP in the presence of a proton or sodium gradient. F-type ATPases consist of two structural domains, F(1) containing the extramembraneous catalytic core and F(0) containing the membrane proton channel, linked together by a central stalk and a peripheral stalk. During catalysis, ATP synthesis in the catalytic domain of F(1) is coupled via a rotary mechanism of the central stalk subunits to proton translocation. Its function is as follows. This protein is part of the stalk that links CF(0) to CF(1). It either transmits conformational changes from CF(0) to CF(1) or is implicated in proton conduction. This is ATP synthase subunit delta from Caldicellulosiruptor bescii (strain ATCC BAA-1888 / DSM 6725 / KCTC 15123 / Z-1320) (Anaerocellum thermophilum).